Reading from the N-terminus, the 110-residue chain is Nucleoid-associated protein RALTA_A1934 (110 aa).

Residues 88–98 (TTQEKMGSMTS) show a composition bias toward polar residues. Residues 88-110 (TTQEKMGSMTSGLPLPPGFKLPF) are disordered. Over residues 101–110 (PLPPGFKLPF) the composition is skewed to pro residues.

This sequence belongs to the YbaB/EbfC family. Homodimer.

The protein localises to the cytoplasm. The protein resides in the nucleoid. In terms of biological role, binds to DNA and alters its conformation. May be involved in regulation of gene expression, nucleoid organization and DNA protection. The sequence is that of Nucleoid-associated protein RALTA_A1934 from Cupriavidus taiwanensis (strain DSM 17343 / BCRC 17206 / CCUG 44338 / CIP 107171 / LMG 19424 / R1) (Ralstonia taiwanensis (strain LMG 19424)).